The chain runs to 107 residues: Cysteine proteinase inhibitor (107 aa).

The 90-residue stretch at 18–107 folds into the Cystatin domain; that stretch reads GGVQDAPAGR…KQLQEFKPAA (90 aa). Residues 63–67 carry the Secondary area of contact motif; it reads QVVAG.

This sequence belongs to the cystatin family. Phytocystatin subfamily. Expressed in embryos, developing endosperms, leaves, roots, flowers and pollen grains.

Inhibits papain, ficin, cathepsin B and, to a lesser extent, chymopapain, but is inactive against bromelain. Inhibits the growth of pathogenic fungi. Regulated by the DOF transcription factors SAD (activator) and BPBF (repressor). This is Cysteine proteinase inhibitor (ICY) from Hordeum vulgare (Barley).